Consider the following 442-residue polypeptide: Chromosomal replication initiator protein DnaA (442 aa).

Residues 1-84 are domain I, interacts with DnaA modulators; the sequence is MSVLWSHCIS…LEIGSRAAEA (84 aa). The domain II stretch occupies residues 84-105; that stretch reads AAQMRSANPPRKTAPARKQVPN. Residues 106–322 form a domain III, AAA+ region region; sequence NLNSAFIFGN…GALRRVIANA (217 aa). Positions 150, 152, 153, and 154 each coordinate ATP. The segment at 323 to 442 is domain IV, binds dsDNA; it reads QFTGRPITLE…FSNLLRILSN (120 aa).

It belongs to the DnaA family. Oligomerizes as a right-handed, spiral filament on DNA at oriC.

It is found in the cytoplasm. Plays an essential role in the initiation and regulation of chromosomal replication. ATP-DnaA binds to the origin of replication (oriC) to initiate formation of the DNA replication initiation complex once per cell cycle. Binds the DnaA box (a 9 base pair repeat at the origin) and separates the double-stranded (ds)DNA. Forms a right-handed helical filament on oriC DNA; dsDNA binds to the exterior of the filament while single-stranded (ss)DNA is stabiized in the filament's interior. The ATP-DnaA-oriC complex binds and stabilizes one strand of the AT-rich DNA unwinding element (DUE), permitting loading of DNA polymerase. After initiation quickly degrades to an ADP-DnaA complex that is not apt for DNA replication. Binds acidic phospholipids. This Methylococcus capsulatus (strain ATCC 33009 / NCIMB 11132 / Bath) protein is Chromosomal replication initiator protein DnaA.